The primary structure comprises 183 residues: Translation initiation factor IF-3 (183 aa).

The protein belongs to the IF-3 family. In terms of assembly, monomer.

It localises to the cytoplasm. Functionally, IF-3 binds to the 30S ribosomal subunit and shifts the equilibrium between 70S ribosomes and their 50S and 30S subunits in favor of the free subunits, thus enhancing the availability of 30S subunits on which protein synthesis initiation begins. This Pseudomonas fluorescens (strain SBW25) protein is Translation initiation factor IF-3.